Here is a 232-residue protein sequence, read N- to C-terminus: LexA repressor (232 aa).

Positions 1-10 are enriched in polar residues; sequence MDDSNDSSSA. The tract at residues 1–22 is disordered; it reads MDDSNDSSSAGPDGRLHAVDPS. Positions 47-67 form a DNA-binding region, H-T-H motif; that stretch reads IREIGDAVGLTSTSSVAHQLR. Catalysis depends on for autocatalytic cleavage activity residues S156 and K193.

The protein belongs to the peptidase S24 family. As to quaternary structure, homodimer.

It carries out the reaction Hydrolysis of Ala-|-Gly bond in repressor LexA.. Its function is as follows. Represses a number of genes involved in the response to DNA damage (SOS response), including recA and lexA. In the presence of single-stranded DNA, RecA interacts with LexA causing an autocatalytic cleavage which disrupts the DNA-binding part of LexA, leading to derepression of the SOS regulon and eventually DNA repair. In Mycolicibacterium paratuberculosis (strain ATCC BAA-968 / K-10) (Mycobacterium paratuberculosis), this protein is LexA repressor.